An 85-amino-acid polypeptide reads, in one-letter code: UPF0297 protein Cbei_1105 (85 aa).

It belongs to the UPF0297 family.

This is UPF0297 protein Cbei_1105 from Clostridium beijerinckii (strain ATCC 51743 / NCIMB 8052) (Clostridium acetobutylicum).